Here is a 284-residue protein sequence, read N- to C-terminus: Bifunctional protein FolD (284 aa).

NADP(+) is bound by residues 165-167, Ser-190, and Val-231; that span reads GRS.

The protein belongs to the tetrahydrofolate dehydrogenase/cyclohydrolase family. As to quaternary structure, homodimer.

It catalyses the reaction (6R)-5,10-methylene-5,6,7,8-tetrahydrofolate + NADP(+) = (6R)-5,10-methenyltetrahydrofolate + NADPH. The catalysed reaction is (6R)-5,10-methenyltetrahydrofolate + H2O = (6R)-10-formyltetrahydrofolate + H(+). The protein operates within one-carbon metabolism; tetrahydrofolate interconversion. Functionally, catalyzes the oxidation of 5,10-methylenetetrahydrofolate to 5,10-methenyltetrahydrofolate and then the hydrolysis of 5,10-methenyltetrahydrofolate to 10-formyltetrahydrofolate. This chain is Bifunctional protein FolD, found in Ruminiclostridium cellulolyticum (strain ATCC 35319 / DSM 5812 / JCM 6584 / H10) (Clostridium cellulolyticum).